The following is a 1411-amino-acid chain: MASISEPVTFREFCPLYYLLNAIPTKIQKGFRSIVVYLTALDTNGDYIAVGSSIGMLYLYCRHLNQMRKYNFEGKTESITVVKLLSCFDDLVAAGTASGRVAVFQLVSSLPGRNKQLRRFDVTGIHKNSITALAWSPNGMKLFSGDDKGKIVYSSLDLDQGLCNSQLVLEEPSSIVQLDYSQKVLLVSTLQRSLLFYTEEKSVRQIGTQPRKSTGKFGACFIPGLCKQSDLTLYASRPGLRLWKADVHGTVQATFILKDAFAGGVKPFELHPRLESPNSGSCSLPERHLGLVSCFFQEGWVLSWNEYSIYLLDTVNQATVAGLEGSGDIVSVSCTENEIFFLKGDRNIIRISSRPEGLTSTVRDGLEMSGCSERVHVQQAEKLPGATVSETRLRGSSMASSVASEPRSRSSSLNSTDSGSGLLPPGLQATPELGKGSQPLSQRFNAISSEDFDQELVVKPIKVKRKKKKKKTEGGSRSTCHSSLESTPCSEFPGDSPQSLNTDLLSMTSSVLGSSVDQLSAESPDQESSFNGEVNGVPQENTDPETFNVLEVSGSMPDSLAEEDDIRTEMPHCHHAHGRELLNGAREDVGGSDVTGLGDEPCPADDGPNSTQLPFQEQDSSPGAHDGEDIQPIGPQSTFCEVPLLNSLTVPSSLSWAPSAEQWLPGTRADEGSPVEPSQEQDILTSMEASGHLSTNLWHAVTDDDTGQKEIPISERVLGSVGGQLTPVSALAASTHKPWLEQPPRDQTLTSSDEEDIYAHGLPSSSSETSVTELGPSCSQQDLSRLGAEDAGLLKPDQFAESWMGYSGPGYGILSLVVSEKYIWCLDYKGGLFCSALPGAGLRWQKFEDAVQQVAVSPSGALLWKIEQKSNRAFACGKVTIKGKRHWYEALPQAVFVALSDDTAWIIRTSGDLYLQTGLSVDRPCARAVKVDCPYPLSQITARNNVVWALTEQRALLYREGVSSFCPEGEQWKCDIVSERQALEPVCITLGDQQTLWALDIHGNLWFRTGIISKKPQGDDDHWWQVSITDYVVFDQCSLFQTIIHATHSVATAAQAPVEKVADKLRMAFWSQQLQCQPSLLGVNNSGVWISSGKNEFHVAKGSLIGTYWNHVVPRGTASATKWAFVLASAAPTKEGSFLWLCQSSKDLCSVSAQSAQSRPSTVQLPPEAEMRAYAACQDALWALDSLGQVFIRTLSKSCPTGMHWTRLDLSQLGAVKLTSLACGNQHIWACDSRGGVYFRVGTQPLNPSLMLPAWIMIEPPVQPAGVSLVSVHSSPNDQMLWVLDSRWNVHVRTGITEEMPVGTAWEHVPGLQACQLALSTRTVWARCPNGDLARRYGVTDKNPAGDYWKKIPGSVSCFTVTASDELWAVGPPGYLLQRLTKTFSHSHGTQKSSQAAMPHPEDLEDEWEVI.

7 WD repeats span residues 23–66 (IPTK…HLNQ), 67–114 (MRKY…PGRN), 115–161 (KQLR…LDQG), 162–203 (LCNS…EKSV), 204–265 (RQIG…AGGV), 266–309 (KPFE…EYSI), and 310–343 (YLLD…FFLK). Disordered regions lie at residues 379 to 439 (QAEK…GSQP), 463 to 542 (VKRK…QENT), 579 to 637 (RELL…GPQS), and 758 to 779 (YAHG…PSCS). The span at 400 to 420 (SSVASEPRSRSSSLNSTDSGS) shows a compositional bias: low complexity. 4 stretches are compositionally biased toward polar residues: residues 475–489 (GSRS…STPC), 496–542 (SPQS…QENT), 608–621 (PNST…QDSS), and 763–779 (PSSS…PSCS). TECPR repeat units follow at residues 945–976 (NVVW…KCDI), 994–1027 (QTLW…WQVS), 1179–1209 (DALW…TRLD), 1226–1259 (QHIW…IMIE), 1279–1310 (QMLW…EHVP), and 1322–1353 (RTVW…KKIP). The disordered stretch occupies residues 1388–1411 (HGTQKSSQAAMPHPEDLEDEWEVI).

Belongs to the WD repeat KIAA0329 family. In terms of assembly, interacts with the ATG8 family members GABARAP, GABARAPL1, GABARAPL2, MAP1LC3B and MAP1LC3C. Detected in skin fibroblast (at protein level).

In terms of biological role, probably plays a role as positive regulator of autophagy. The chain is Tectonin beta-propeller repeat-containing protein 2 (TECPR2) from Homo sapiens (Human).